Here is a 146-residue protein sequence, read N- to C-terminus: Probable trivalent organoarsenical cleaving enzyme (146 aa).

The VOC domain maps to 2-118 (KYVHVGVNVV…DGNEWEFFYT (117 aa)). The Fe(2+) site is built by histidine 5 and histidine 62. Roxarsone (III)-binding residues include cysteine 95 and cysteine 96. Glutamate 114 contacts Fe(2+).

This sequence to M.tuberculosis Rv2641. It depends on Fe(2+) as a cofactor.

It carries out the reaction methylarsonous acid + AH2 + O2 = arsenite + methanol + A + H(+). The catalysed reaction is roxarsone (III) + AH2 + O2 = 4-hydroxy-3-nitrocyclohexa-2,5-dien-1-one + arsenite + A + H(+). It catalyses the reaction nitarsone (III) + AH2 + O2 = 4-nitrocyclohexa-2,5-dien-1-one + arsenite + A + H(+). The enzyme catalyses 4-aminophenylarsonous acid + AH2 + O2 = 4-aminocyclohexa-2,5-dien-1-one + arsenite + A. Nonheme iron-dependent dioxygenase that can break carbon-arsenic bonds, playing a role in the detoxification of environmental organoarsenical compounds. Catalyzes the oxygen-dependent demethylation of highly toxic methylarsonous acid (MAs(III)) to arsenite, which can then be exported out of the cell. Can also cleave the C-As bond in several trivalent aromatic arsenicals, including roxarsone (III), nitarsone (III) and (4-aminophenyl)arsonous acid. Organoarsenical degradation by this enzyme is proposed to have a significant impact on the arsenic biogeocycle that maintains a balance between organic and inorganic species. The sequence is that of Probable trivalent organoarsenical cleaving enzyme (yqcK) from Bacillus subtilis (strain 168).